Consider the following 249-residue polypeptide: UPF0758 protein Oant_1909 (249 aa).

An MPN domain is found at 127 to 249; that stretch reads VLGSWNKVIE…HASFRGLGLI (123 aa). Positions 198, 200, and 211 each coordinate Zn(2+). The short motif at 198-211 is the JAMM motif element; sequence HNHPSGDPTPSRAD.

Belongs to the UPF0758 family.

This chain is UPF0758 protein Oant_1909, found in Brucella anthropi (strain ATCC 49188 / DSM 6882 / CCUG 24695 / JCM 21032 / LMG 3331 / NBRC 15819 / NCTC 12168 / Alc 37) (Ochrobactrum anthropi).